The primary structure comprises 85 residues: Putative membrane protein insertion efficiency factor (85 aa).

This sequence belongs to the UPF0161 family.

The protein resides in the cell inner membrane. In terms of biological role, could be involved in insertion of integral membrane proteins into the membrane. The sequence is that of Putative membrane protein insertion efficiency factor from Dictyoglomus thermophilum (strain ATCC 35947 / DSM 3960 / H-6-12).